The chain runs to 194 residues: Bis(5'-nucleosyl)-tetraphosphatase, symmetrical (194 aa).

The HD domain occupies 18 to 132; the sequence is RYNHSLRVAE…IFIADYIEPG (115 aa). ADP is bound at residue His21. Fe cation-binding residues include His21, His50, and Asp51. ADP-binding positions include 51-54, His83, 109-110, Asp127, Arg133, and 172-177; these read DFCK, HT, and TVYNKT. Residue Asp127 coordinates Fe cation.

Belongs to the Ap4A hydrolase YqeK family. In terms of assembly, homodimer.

It carries out the reaction P(1),P(4)-bis(5'-adenosyl) tetraphosphate + H2O = 2 ADP + 2 H(+). Its activity is regulated as follows. Inhibited by EDTA. In terms of biological role, hydrolyzes diadenosine 5',5'''-P1,P4-tetraphosphate (Ap4A) to yield ADP. Can also hydrolyze Ap3A, Ap5A, Ap4G, Ap4U and Gp4G, always releasing ADP or GDP as one of the products, but it exhibits a marked preference for Ap4A, which is mainly exerted at the substrate affinity level. The polypeptide is Bis(5'-nucleosyl)-tetraphosphatase, symmetrical (Staphylococcus aureus (strain NCTC 8325 / PS 47)).